A 367-amino-acid chain; its full sequence is Methylated-thiol--coenzyme M methyltransferase (367 aa).

Zn(2+) contacts are provided by His236, Cys238, and Cys313.

It belongs to the uroporphyrinogen decarboxylase family. As to quaternary structure, homodimer. Zn(2+) is required as a cofactor.

The enzyme catalyses methanethiol + coenzyme M = methyl-coenzyme M + hydrogen sulfide + H(+). Methyltransferase involved in methanogenesis from methylated-thiols. Catalyzes two successive steps: mediates the transfer of a methyl group from the substrate to the cobalt cofactor of a methylated-thiol-specific corrinoid protein (MtsB), and the subsequent transfer of the methyl group from the corrinoid protein to coenzyme M. The chain is Methylated-thiol--coenzyme M methyltransferase (mtsA) from Methanosarcina mazei (strain ATCC BAA-159 / DSM 3647 / Goe1 / Go1 / JCM 11833 / OCM 88) (Methanosarcina frisia).